The primary structure comprises 274 residues: Shikimate kinase (274 aa).

86–96 is a binding site for ATP; sequence PVGKGLKSSSA.

Belongs to the GHMP kinase family. Archaeal shikimate kinase subfamily.

Its subcellular location is the cytoplasm. It carries out the reaction shikimate + ATP = 3-phosphoshikimate + ADP + H(+). It participates in metabolic intermediate biosynthesis; chorismate biosynthesis; chorismate from D-erythrose 4-phosphate and phosphoenolpyruvate: step 5/7. This is Shikimate kinase (aroK) from Pyrococcus abyssi (strain GE5 / Orsay).